Consider the following 155-residue polypeptide: Large ribosomal subunit protein uL13 (155 aa).

Belongs to the universal ribosomal protein uL13 family. As to quaternary structure, part of the 50S ribosomal subunit.

Its function is as follows. This protein is one of the early assembly proteins of the 50S ribosomal subunit, although it is not seen to bind rRNA by itself. It is important during the early stages of 50S assembly. The protein is Large ribosomal subunit protein uL13 of Rickettsia bellii (strain OSU 85-389).